The sequence spans 509 residues: MASTVWGGAPWWGPPPPAPARPLTDIDFCSGAQLQELTQLIQELRVQESWSEGPKPGADLLRAKDFVFALLGLVHRQDPRFPPQAELLLLRGGIREGSLDLGHAPLGPYSRGPHYDAGFTLLVPVFSLDGTGPELLLDLESCSAWLRLPELMRGILVREAWQDCLGPPVPEESDMTHQTHSKESPTDRENSVDPSHDYVPEPEPHMSLQKSSSDLSESQSSYKDITNPETPEPLETLSSDALDADESQVPKPSEAPKAWPTLCPTQVTSWFFVKLAEVAESLIPVPGAPRLVHAARHAGVTTVLLATPEPPRHLLLFDLIPVVTVTGWPDTARSHSWAGPLVSESASFYLVPGSLPEQPSTSGWQLCFARQELALKERIPTPLLQAHAAAQALLRPLVAGTRAAAPYLLRTLLYWACERLPALYLARPENAGACCLGLLDELSRVLEAGALPHYFLSGRKLRVGDGSAALRGALAQLRGDPAQALREAVEEAKVARKGGGLAGVGGGTH.

Topologically, residues 1 to 312 are extracellular; the sequence is MASTVWGGAP…VLLATPEPPR (312 aa). The interval 167–236 is disordered; sequence PPVPEESDMT…NPETPEPLET (70 aa). Residues 174-204 show a composition bias toward basic and acidic residues; sequence DMTHQTHSKESPTDRENSVDPSHDYVPEPEP. Low complexity predominate over residues 207-224; sequence SLQKSSSDLSESQSSYKD. Residues 313-329 form a helical membrane-spanning segment; the sequence is HLLLFDLIPVVTVTGWP. The Cytoplasmic portion of the chain corresponds to 330 to 509; that stretch reads DTARSHSWAG…GLAGVGGGTH (180 aa).

As to quaternary structure, interacts with CSF2RB; this interaction occurs preferentially in the absence of CSF2.

It localises to the cell membrane. In terms of biological role, selectively involved in CSF2 deprivation-induced apoptosis via a mitochondria-dependent pathway. The sequence is that of Transmembrane protein 102 (Tmem102) from Mus musculus (Mouse).